We begin with the raw amino-acid sequence, 780 residues long: MSKMPAKKKSCFQITSVTTAQVATSITEDTESLDDPDESRTEDVSSEIFDVSRATDYGPEEVCERSSSEETLNNVGDAETPGTVSPNLLLDGQLAAAAAAPANGGGVVSARSVSGALASTLAAAATSAPAPGAPGGPQLAGSSAGPVTAAPSQPPTTCSSRFRVIKLDHGSGEPYRRGRWTCMEYYERDSDSSVLTRSGDCIRHSSTFDQTAERDSGLGATGGSVVVVVASMQGAHGPESGTDSSLTAVSQLPPSEKMSQPTPAQPQSFSVGQPQPPPPPVGGAVAQSSAPLPPFPGAATGPQPMMAAAQPSQPQGAGPGGQTLPPTNVTLAQPAMSLPPQPGPAVGAPAAQQPQQFAYPQPQIPPGHLLPVQPSGQSEYLQQHVAGLQPPSPAQPSSTGAAASPATAATLPVGTGQNASSVGAQLMGASSQPSEAMAPRTGPAQGGQVAPCQPTGVPPATVGGVVQPCLGPAGAGQPQSVPPPQMGGSGPLSAVPGGPHAVVPGVPNVPAAVPAPSVPSVSTTSVTMPNVPAPLAQSQQLSSHTPVSRSSSIIQHVGLPLAPGTHSAPTSLPQSDLSQFQTQTQPLVGQVDDTRRKSEPLPQPPLSLIAENKPVVKPPVADSLANPLQLTPMNSLATSVFSIAIPVDGDEDRNPSTAFYQAFHLNTLKESKSLWDSASGGGVVAIDNKIEQAMDLVKSHLMYAVREEVEVLKEQIKELVERNSLLERENALLKSLSSNDQLSQLPTQQANPGSTSQQQAVIAQPPQPTQPPQQPNVSSA.

5 disordered regions span residues 20–86 (AQVA…TVSP), 126–158 (TSAP…PTTC), 235–499 (AHGP…PGGP), 587–607 (LVGQ…PPLS), and 736–780 (LSSN…VSSA). The span at 28-37 (EDTESLDDPD) shows a compositional bias: acidic residues. The segment covering 126 to 146 (TSAPAPGAPGGPQLAGSSAGP) has biased composition (low complexity). A compositionally biased stretch (polar residues) spans 241–262 (GTDSSLTAVSQLPPSEKMSQPT). Composition is skewed to low complexity over residues 297–316 (GAAT…QPQG), 344–361 (PAVG…AYPQ), and 395–412 (QPSS…ATLP). Residues 415 to 434 (TGQNASSVGAQLMGASSQPS) show a composition bias toward polar residues. Positions 453–468 (QPTGVPPATVGGVVQP) are enriched in low complexity. Positions 736 to 756 (LSSNDQLSQLPTQQANPGSTS) are enriched in polar residues. Residues 765–774 (PPQPTQPPQQ) show a composition bias toward pro residues.

The protein belongs to the TSC-22/Dip/Bun family. In terms of assembly, interacts with NRBP1. Interacts with PKM isoform M2; the interaction results in reduced nuclear levels of PKM isoform M2, leading to repression of cyclin CCND1 transcription and reduced cell growth. Interacts with WDR77.

Its function is as follows. Reduces the level of nuclear PKM isoform M2 which results in repression of cyclin CCND1 transcription and reduced cell growth. This Homo sapiens (Human) protein is TSC22 domain family protein 2.